The chain runs to 117 residues: Immunoglobulin kappa variable 1-16 (117 aa).

A signal peptide spans 1-22 (MDMRVLAQLLGLLLLCFPGARC). The framework-1 stretch occupies residues 23–45 (DIQMTQSPSSLSASVGDRVTITC). One can recognise an Ig-like domain in the interval 24 to 117 (IQMTQSPSSL…YYCQQYNSYP (94 aa)). Residues cysteine 45 and cysteine 110 are joined by a disulfide bond. Positions 46 to 56 (RASQGISNYLA) are complementarity-determining-1. The tract at residues 57–71 (WFQQKPGKAPKSLIY) is framework-2. The complementarity-determining-2 stretch occupies residues 72 to 78 (AASSLQS). The segment at 79 to 110 (GVPSKFSGSGSGTDFTLTISSLQPEDFATYYC) is framework-3. Residues 111–117 (QQYNSYP) are complementarity-determining-3.

Immunoglobulins are composed of two identical heavy chains and two identical light chains; disulfide-linked.

It localises to the secreted. Its subcellular location is the cell membrane. In terms of biological role, v region of the variable domain of immunoglobulin light chains that participates in the antigen recognition. Immunoglobulins, also known as antibodies, are membrane-bound or secreted glycoproteins produced by B lymphocytes. In the recognition phase of humoral immunity, the membrane-bound immunoglobulins serve as receptors which, upon binding of a specific antigen, trigger the clonal expansion and differentiation of B lymphocytes into immunoglobulins-secreting plasma cells. Secreted immunoglobulins mediate the effector phase of humoral immunity, which results in the elimination of bound antigens. The antigen binding site is formed by the variable domain of one heavy chain, together with that of its associated light chain. Thus, each immunoglobulin has two antigen binding sites with remarkable affinity for a particular antigen. The variable domains are assembled by a process called V-(D)-J rearrangement and can then be subjected to somatic hypermutations which, after exposure to antigen and selection, allow affinity maturation for a particular antigen. The chain is Immunoglobulin kappa variable 1-16 from Homo sapiens (Human).